The following is a 541-amino-acid chain: Arginine--tRNA ligase (541 aa).

The short motif at 119–129 is the 'HIGH' region element; sequence ANPTGPLHIGH.

This sequence belongs to the class-I aminoacyl-tRNA synthetase family. Monomer.

It localises to the cytoplasm. The catalysed reaction is tRNA(Arg) + L-arginine + ATP = L-arginyl-tRNA(Arg) + AMP + diphosphate. This Helicobacter pylori (strain ATCC 700392 / 26695) (Campylobacter pylori) protein is Arginine--tRNA ligase (argS).